The sequence spans 241 residues: Ribonuclease PH (241 aa).

Phosphate-binding positions include arginine 89 and 127-129 (GTR).

The protein belongs to the RNase PH family. In terms of assembly, homohexameric ring arranged as a trimer of dimers.

It catalyses the reaction tRNA(n+1) + phosphate = tRNA(n) + a ribonucleoside 5'-diphosphate. Phosphorolytic 3'-5' exoribonuclease that plays an important role in tRNA 3'-end maturation. Removes nucleotide residues following the 3'-CCA terminus of tRNAs; can also add nucleotides to the ends of RNA molecules by using nucleoside diphosphates as substrates, but this may not be physiologically important. Probably plays a role in initiation of 16S rRNA degradation (leading to ribosome degradation) during starvation. In Xylella fastidiosa (strain M23), this protein is Ribonuclease PH.